Here is a 346-residue protein sequence, read N- to C-terminus: Glycerol-1-phosphate dehydrogenase [NAD(P)+] (346 aa).

Residues 93–97 and 115–118 each bind NAD(+); these read GSIID and TTAS. Position 120 (Asp-120) interacts with substrate. Ser-124 is an NAD(+) binding site. Position 167 (Asp-167) interacts with substrate. Asp-167 and His-247 together coordinate Zn(2+). His-251 contacts substrate. Residue His-263 participates in Zn(2+) binding.

This sequence belongs to the glycerol-1-phosphate dehydrogenase family. The cofactor is Zn(2+).

It localises to the cytoplasm. It carries out the reaction sn-glycerol 1-phosphate + NAD(+) = dihydroxyacetone phosphate + NADH + H(+). The catalysed reaction is sn-glycerol 1-phosphate + NADP(+) = dihydroxyacetone phosphate + NADPH + H(+). The protein operates within membrane lipid metabolism; glycerophospholipid metabolism. Its function is as follows. Catalyzes the NAD(P)H-dependent reduction of dihydroxyacetonephosphate (DHAP or glycerone phosphate) to glycerol 1-phosphate (G1P). The G1P thus generated is used as the glycerophosphate backbone of phospholipids in the cellular membranes of Archaea. The polypeptide is Glycerol-1-phosphate dehydrogenase [NAD(P)+] (Pyrococcus abyssi (strain GE5 / Orsay)).